The following is a 322-amino-acid chain: Thioredoxin reductase (322 aa).

FAD contacts are provided by residues 12–15 (SGPA), 34–42 (EGAVTAGGA), N51, and V84. The cysteines at positions 136 and 139 are disulfide-linked. Positions 176, 182, 239, and 259 each coordinate NADP(+). Residues D279 and 286 to 289 (RQAI) contribute to the FAD site. R286 serves as a coordination point for NADP(+).

It belongs to the class-II pyridine nucleotide-disulfide oxidoreductase family. As to quaternary structure, homodimer. The cofactor is FAD.

It localises to the cytoplasm. The catalysed reaction is [thioredoxin]-dithiol + NADP(+) = [thioredoxin]-disulfide + NADPH + H(+). This Streptomyces coelicolor (strain ATCC BAA-471 / A3(2) / M145) protein is Thioredoxin reductase.